The primary structure comprises 253 residues: 5'/3'-nucleotidase SurE (253 aa).

A divalent metal cation-binding residues include aspartate 8, aspartate 9, serine 39, and asparagine 92.

This sequence belongs to the SurE nucleotidase family. The cofactor is a divalent metal cation.

The protein resides in the cytoplasm. It carries out the reaction a ribonucleoside 5'-phosphate + H2O = a ribonucleoside + phosphate. It catalyses the reaction a ribonucleoside 3'-phosphate + H2O = a ribonucleoside + phosphate. The catalysed reaction is [phosphate](n) + H2O = [phosphate](n-1) + phosphate + H(+). In terms of biological role, nucleotidase with a broad substrate specificity as it can dephosphorylate various ribo- and deoxyribonucleoside 5'-monophosphates and ribonucleoside 3'-monophosphates with highest affinity to 3'-AMP. Also hydrolyzes polyphosphate (exopolyphosphatase activity) with the preference for short-chain-length substrates (P20-25). Might be involved in the regulation of dNTP and NTP pools, and in the turnover of 3'-mononucleotides produced by numerous intracellular RNases (T1, T2, and F) during the degradation of various RNAs. The sequence is that of 5'/3'-nucleotidase SurE from Serratia proteamaculans (strain 568).